The chain runs to 202 residues: Small ribosomal subunit protein uS5 (202 aa).

The 64-residue stretch at 46–109 (LKSEVLSVGF…RRAKLNIVPV (64 aa)) folds into the S5 DRBM domain.

Belongs to the universal ribosomal protein uS5 family. Part of the 30S ribosomal subunit. Contacts protein S4.

Its function is as follows. With S4 and S12 plays an important role in translational accuracy. The chain is Small ribosomal subunit protein uS5 from Thermofilum pendens (strain DSM 2475 / Hrk 5).